A 311-amino-acid chain; its full sequence is Putative mitochondrial transporter UCP3 (311 aa).

The Mitochondrial intermembrane portion of the chain corresponds to 1–10 (MVGLKPSEVP). The chain crosses the membrane as a helical span at residues 11 to 32 (PTTAVKFLGAGTAACFADLLTF). Solcar repeat units follow at residues 11–105 (PTTA…VKQF), 114–205 (SSIT…IKEK), and 214–299 (DNFP…LKRA). At 33-76 (PLDTAKVRLQIQGENQATQAARRIQYRGVLGTILTMVRTEGPRS) the chain is on the mitochondrial matrix side. A helical membrane pass occupies residues 77–99 (PYNGLVAGLQRQMSFASIRIGLY). The Mitochondrial intermembrane segment spans residues 100 to 119 (DSVKQFYTPKGSDHSSITTR). The helical transmembrane segment at 120–136 (ILAGCTTGAMAVSCAQP) threads the bilayer. The Mitochondrial matrix portion of the chain corresponds to 137-182 (TDVVKVRFQASIHLGAGSNRKYSGTMDAYRTIAREEGVRGLWKGTL). A helical transmembrane segment spans residues 183–199 (PNITRNAIVNCAEMVTY). At 200–216 (DIIKEKLLDYHLLTDNF) the chain is on the mitochondrial intermembrane side. A helical transmembrane segment spans residues 217-236 (PCHLISAFGAGFCATVVASP). The Mitochondrial matrix segment spans residues 237–270 (VDVVKTRYMNSPPGQYCSPLDCMLKMVTQEGPTA). Residues 271–293 (FYKGFTPSFLRLGTWNVVMFVTY) traverse the membrane as a helical segment. The interval 278-300 (SFLRLGTWNVVMFVTYEQLKRAL) is purine nucleotide binding. The Mitochondrial intermembrane segment spans residues 294–311 (EQLKRALMKVQMLRESPF).

The protein belongs to the mitochondrial carrier (TC 2.A.29) family. In terms of assembly, interacts with HAX1; the interaction is direct and calcium-dependent.

It localises to the mitochondrion inner membrane. Functionally, putative transmembrane transporter that plays a role in mitochondrial metabolism via an as yet unclear mechanism. Originally, this mitochondrial protein was thought to act as a proton transmembrane transporter from the mitochondrial intermembrane space into the matrix, causing proton leaks through the inner mitochondrial membrane, thereby uncoupling mitochondrial membrane potential generation from ATP synthesis. However, this function is controversial and uncoupling may not be the function, or at least not the main function, but rather a consequence of more conventional metabolite transporter activity. This is Putative mitochondrial transporter UCP3 from Canis lupus familiaris (Dog).